A 125-amino-acid chain; its full sequence is Large ribosomal subunit protein bL19 (125 aa).

It belongs to the bacterial ribosomal protein bL19 family.

In terms of biological role, this protein is located at the 30S-50S ribosomal subunit interface and may play a role in the structure and function of the aminoacyl-tRNA binding site. This Ehrlichia canis (strain Jake) protein is Large ribosomal subunit protein bL19.